The following is a 123-amino-acid chain: Small ribosomal subunit protein uS12 (123 aa).

The interval 9-28 (RNGRKRATKKTTTPALKGAP) is disordered. The segment covering 18 to 27 (KTTTPALKGA) has biased composition (low complexity). A 3-methylthioaspartic acid modification is found at D89.

This sequence belongs to the universal ribosomal protein uS12 family. As to quaternary structure, part of the 30S ribosomal subunit. Contacts proteins S8 and S17. May interact with IF1 in the 30S initiation complex.

In terms of biological role, with S4 and S5 plays an important role in translational accuracy. Its function is as follows. Interacts with and stabilizes bases of the 16S rRNA that are involved in tRNA selection in the A site and with the mRNA backbone. Located at the interface of the 30S and 50S subunits, it traverses the body of the 30S subunit contacting proteins on the other side and probably holding the rRNA structure together. The combined cluster of proteins S8, S12 and S17 appears to hold together the shoulder and platform of the 30S subunit. This chain is Small ribosomal subunit protein uS12, found in Desulfosudis oleivorans (strain DSM 6200 / JCM 39069 / Hxd3) (Desulfococcus oleovorans).